Consider the following 183-residue polypeptide: GTP cyclohydrolase 1 (183 aa).

The Zn(2+) site is built by cysteine 71, histidine 74, and cysteine 142.

Belongs to the GTP cyclohydrolase I family. As to quaternary structure, homomer.

The enzyme catalyses GTP + H2O = 7,8-dihydroneopterin 3'-triphosphate + formate + H(+). The protein operates within cofactor biosynthesis; 7,8-dihydroneopterin triphosphate biosynthesis; 7,8-dihydroneopterin triphosphate from GTP: step 1/1. The sequence is that of GTP cyclohydrolase 1 from Leptospira biflexa serovar Patoc (strain Patoc 1 / Ames).